Reading from the N-terminus, the 1228-residue chain is DNA-directed RNA polymerase subunit beta (1228 aa).

The protein belongs to the RNA polymerase beta chain family. The RNAP catalytic core consists of 2 alpha, 1 beta, 1 beta' and 1 omega subunit. When a sigma factor is associated with the core the holoenzyme is formed, which can initiate transcription.

The catalysed reaction is RNA(n) + a ribonucleoside 5'-triphosphate = RNA(n+1) + diphosphate. In terms of biological role, DNA-dependent RNA polymerase catalyzes the transcription of DNA into RNA using the four ribonucleoside triphosphates as substrates. The sequence is that of DNA-directed RNA polymerase subunit beta from Leptospira biflexa serovar Patoc (strain Patoc 1 / Ames).